Consider the following 91-residue polypeptide: Acylphosphatase (91 aa).

An Acylphosphatase-like domain is found at 6–91 (CMRCYISGRV…WEDYISFDVL (86 aa)). Residues arginine 21 and asparagine 39 contribute to the active site.

Belongs to the acylphosphatase family.

The catalysed reaction is an acyl phosphate + H2O = a carboxylate + phosphate + H(+). The chain is Acylphosphatase (acyP) from Legionella pneumophila (strain Corby).